A 243-amino-acid chain; its full sequence is Ubiquinone biosynthesis O-methyltransferase (243 aa).

Residues R45, G65, D86, and L130 each coordinate S-adenosyl-L-methionine.

It belongs to the methyltransferase superfamily. UbiG/COQ3 family.

It carries out the reaction a 3-demethylubiquinol + S-adenosyl-L-methionine = a ubiquinol + S-adenosyl-L-homocysteine + H(+). The enzyme catalyses a 3-(all-trans-polyprenyl)benzene-1,2-diol + S-adenosyl-L-methionine = a 2-methoxy-6-(all-trans-polyprenyl)phenol + S-adenosyl-L-homocysteine + H(+). It participates in cofactor biosynthesis; ubiquinone biosynthesis. Functionally, O-methyltransferase that catalyzes the 2 O-methylation steps in the ubiquinone biosynthetic pathway. The sequence is that of Ubiquinone biosynthesis O-methyltransferase from Idiomarina loihiensis (strain ATCC BAA-735 / DSM 15497 / L2-TR).